Reading from the N-terminus, the 482-residue chain is O-acyltransferase ausP (482 aa).

Residues His180 and Asp412 each act as proton acceptor in the active site.

This sequence belongs to the plant acyltransferase family. Monomer.

The protein operates within secondary metabolite biosynthesis; terpenoid biosynthesis. In terms of biological role, O-acyltransferase; part of the gene cluster B that mediates the biosynthesis of the fungal meroterpenoid acetoxydehydroaustin. The first step of the pathway is the synthesis of 3,5-dimethylorsellinic acid by the polyketide synthase ausA. 3,5-dimethylorsellinic acid is then prenylated by the polyprenyl transferase ausN. Further epoxidation by the FAD-dependent monooxygenase ausM and cyclization by the probable terpene cyclase ausL lead to the formation of protoaustinoid A. Protoaustinoid A is then oxidized to spiro-lactone preaustinoid A3 by the combined action of the FAD-binding monooxygenases ausB and ausC, and the dioxygenase ausE. Acid-catalyzed keto-rearrangement and ring contraction of the tetraketide portion of preaustinoid A3 by ausJ lead to the formation of preaustinoid A4. The aldo-keto reductase ausK, with the help of ausH, is involved in the next step by transforming preaustinoid A4 into isoaustinone which is in turn hydroxylated by the P450 monooxygenase ausI to form austinolide. The cytochrome P450 monooxygenase ausG then modifies austinolide to austinol. Austinol is further acetylated to austin by the O-acetyltransferase ausP, which spontaneously changes to dehydroaustin. The cytochrome P450 monooxygenase then converts dehydroaustin is into 7-dehydrodehydroaustin. The hydroxylation catalyzed by ausR permits the second O-acetyltransferase ausQ to add an additional acetyl group to the molecule, leading to the formation of acetoxydehydroaustin. Due to genetic rearrangements of the clusters and the subsequent loss of some enzymes, the end product of the Penicillium brasilianum austinoid biosynthesis clusters is acetoxydehydroaustin. This Penicillium brasilianum protein is O-acyltransferase ausP.